Consider the following 418-residue polypeptide: Diaminopimelate decarboxylase (418 aa).

Lys-53 carries the post-translational modification N6-(pyridoxal phosphate)lysine. Residues Gly-223 and 264-267 (EPGR) contribute to the pyridoxal 5'-phosphate site. Residues Arg-267, Arg-303, and Tyr-307 each contribute to the substrate site. The active-site Proton donor is the Cys-338. Residues Glu-339 and Tyr-374 each contribute to the substrate site. Tyr-374 lines the pyridoxal 5'-phosphate pocket.

The protein belongs to the Orn/Lys/Arg decarboxylase class-II family. LysA subfamily. In terms of assembly, homodimer. The cofactor is pyridoxal 5'-phosphate.

The catalysed reaction is meso-2,6-diaminopimelate + H(+) = L-lysine + CO2. It participates in amino-acid biosynthesis; L-lysine biosynthesis via DAP pathway; L-lysine from DL-2,6-diaminopimelate: step 1/1. Functionally, specifically catalyzes the decarboxylation of meso-diaminopimelate (meso-DAP) to L-lysine. The polypeptide is Diaminopimelate decarboxylase (Buchnera aphidicola subsp. Baizongia pistaciae (strain Bp)).